We begin with the raw amino-acid sequence, 116 residues long: Putative iron-sulfur cluster insertion protein ErpA (116 aa).

Residues C44, C108, and C110 each contribute to the iron-sulfur cluster site.

The protein belongs to the HesB/IscA family. Homodimer. Iron-sulfur cluster is required as a cofactor.

Required for insertion of 4Fe-4S clusters. In Azoarcus sp. (strain BH72), this protein is Putative iron-sulfur cluster insertion protein ErpA.